The sequence spans 198 residues: Outer-membrane lipoprotein carrier protein (198 aa).

The signal sequence occupies residues 1-16; sequence MKKWLVVFFLSASALA.

This sequence belongs to the LolA family. In terms of assembly, monomer.

Its subcellular location is the periplasm. Its function is as follows. Participates in the translocation of lipoproteins from the inner membrane to the outer membrane. Only forms a complex with a lipoprotein if the residue after the N-terminal Cys is not an aspartate (The Asp acts as a targeting signal to indicate that the lipoprotein should stay in the inner membrane). The polypeptide is Outer-membrane lipoprotein carrier protein (Vibrio vulnificus (strain YJ016)).